A 459-amino-acid polypeptide reads, in one-letter code: Elongation factor 1-alpha 4 (459 aa).

Residues 5-242 (KTHINIVVIG…DCIIPPQRPT (238 aa)) enclose the tr-type G domain. A G1 region spans residues 14-21 (GHVDSGKS). The G2 stretch occupies residues 70 to 74 (GITID). A G3 region spans residues 91–94 (DAPG). The interval 153-156 (NKMD) is G4. Positions 194 to 196 (SGF) are G5. A 5-glutamyl glycerylphosphorylethanolamine mark is found at Glu301 and Glu374.

Belongs to the TRAFAC class translation factor GTPase superfamily. Classic translation factor GTPase family. EF-Tu/EF-1A subfamily.

Its subcellular location is the cytoplasm. Its function is as follows. This protein promotes the GTP-dependent binding of aminoacyl-tRNA to the A-site of ribosomes during protein biosynthesis. The sequence is that of Elongation factor 1-alpha 4 (eft-4) from Oscheius tipulae.